The chain runs to 325 residues: Fiber protein (325 aa).

Belongs to the adenoviridae fiber family. In terms of assembly, homotrimer. Interacts with host receptor CD46. Interacts (via N-terminal tail region) with pentons.

It localises to the virion. Its subcellular location is the host nucleus. Forms spikes that protrude from each vertex of the icosahedral capsid. Interacts with host receptor CD46 to provide virion initial attachment to target cell. Fiber proteins are shed during virus entry, when virus is still at the cell surface. The protein is Fiber protein of Human adenovirus B serotype 11 (strain BC34) (HAdV-11).